The sequence spans 404 residues: uncharacterized protein (404 aa).

Positions 262-278 (VSTGDTSPYGTEDSSPA) are enriched in polar residues. 2 disordered regions span residues 262–307 (VSTG…SPSL) and 320–340 (KKSH…GGAD). Phosphoserine occurs at positions 268, 276, and 279. A phosphothreonine mark is found at T290 and T293. Phosphoserine is present on residues S304, S306, S324, S358, and S362. The span at 320-336 (KKSHSANDSEEFFREDD) shows a compositional bias: basic and acidic residues.

This is an uncharacterized protein from Rattus norvegicus (Rat).